Consider the following 398-residue polypeptide: uncharacterized protein (398 aa).

The 117-residue stretch at 235–351 (VAIVEFSARR…DIVNALNAAL (117 aa)) folds into the CobW C-terminal domain.

This is an uncharacterized protein from Mycobacterium bovis (strain ATCC BAA-935 / AF2122/97).